The following is a 333-amino-acid chain: Holliday junction branch migration complex subunit RuvB (333 aa).

A large ATPase domain (RuvB-L) region spans residues M1–Y182. ATP contacts are provided by residues L21, R22, G63, K66, T67, T68, E129 to F131, R172, Y182, and R219. T67 contacts Mg(2+). The small ATPAse domain (RuvB-S) stretch occupies residues T183–Q253. A head domain (RuvB-H) region spans residues K256–V333. DNA contacts are provided by R311 and R316.

It belongs to the RuvB family. In terms of assembly, homohexamer. Forms an RuvA(8)-RuvB(12)-Holliday junction (HJ) complex. HJ DNA is sandwiched between 2 RuvA tetramers; dsDNA enters through RuvA and exits via RuvB. An RuvB hexamer assembles on each DNA strand where it exits the tetramer. Each RuvB hexamer is contacted by two RuvA subunits (via domain III) on 2 adjacent RuvB subunits; this complex drives branch migration. In the full resolvosome a probable DNA-RuvA(4)-RuvB(12)-RuvC(2) complex forms which resolves the HJ.

It is found in the cytoplasm. It catalyses the reaction ATP + H2O = ADP + phosphate + H(+). Its function is as follows. The RuvA-RuvB-RuvC complex processes Holliday junction (HJ) DNA during genetic recombination and DNA repair, while the RuvA-RuvB complex plays an important role in the rescue of blocked DNA replication forks via replication fork reversal (RFR). RuvA specifically binds to HJ cruciform DNA, conferring on it an open structure. The RuvB hexamer acts as an ATP-dependent pump, pulling dsDNA into and through the RuvAB complex. RuvB forms 2 homohexamers on either side of HJ DNA bound by 1 or 2 RuvA tetramers; 4 subunits per hexamer contact DNA at a time. Coordinated motions by a converter formed by DNA-disengaged RuvB subunits stimulates ATP hydrolysis and nucleotide exchange. Immobilization of the converter enables RuvB to convert the ATP-contained energy into a lever motion, pulling 2 nucleotides of DNA out of the RuvA tetramer per ATP hydrolyzed, thus driving DNA branch migration. The RuvB motors rotate together with the DNA substrate, which together with the progressing nucleotide cycle form the mechanistic basis for DNA recombination by continuous HJ branch migration. Branch migration allows RuvC to scan DNA until it finds its consensus sequence, where it cleaves and resolves cruciform DNA. This is Holliday junction branch migration complex subunit RuvB from Bacillus cereus (strain G9842).